The sequence spans 433 residues: Tol-Pal system protein TolB (433 aa).

The N-terminal stretch at 1 to 21 (MIKRLRGLLVLLCCVAGMAMA) is a signal peptide.

Belongs to the TolB family. In terms of assembly, the Tol-Pal system is composed of five core proteins: the inner membrane proteins TolA, TolQ and TolR, the periplasmic protein TolB and the outer membrane protein Pal. They form a network linking the inner and outer membranes and the peptidoglycan layer.

Its subcellular location is the periplasm. In terms of biological role, part of the Tol-Pal system, which plays a role in outer membrane invagination during cell division and is important for maintaining outer membrane integrity. The sequence is that of Tol-Pal system protein TolB from Pseudomonas entomophila (strain L48).